The following is a 277-amino-acid chain: Urease accessory protein UreD (277 aa).

This sequence belongs to the UreD family. UreD, UreF and UreG form a complex that acts as a GTP-hydrolysis-dependent molecular chaperone, activating the urease apoprotein by helping to assemble the nickel containing metallocenter of UreC. The UreE protein probably delivers the nickel.

The protein localises to the cytoplasm. Functionally, required for maturation of urease via the functional incorporation of the urease nickel metallocenter. The protein is Urease accessory protein UreD of Sinorhizobium medicae (strain WSM419) (Ensifer medicae).